A 624-amino-acid chain; its full sequence is Dihydroxy-acid dehydratase (624 aa).

A Mg(2+)-binding site is contributed by Asp-81. Cys-122 is a binding site for [2Fe-2S] cluster. Asp-123 and Lys-124 together coordinate Mg(2+). An N6-carboxylysine modification is found at Lys-124. Cys-195 contacts [2Fe-2S] cluster. Position 499 (Glu-499) interacts with Mg(2+). The Proton acceptor role is filled by Ser-525.

The protein belongs to the IlvD/Edd family. In terms of assembly, homodimer. Requires [2Fe-2S] cluster as cofactor. Mg(2+) is required as a cofactor.

It catalyses the reaction (2R)-2,3-dihydroxy-3-methylbutanoate = 3-methyl-2-oxobutanoate + H2O. The catalysed reaction is (2R,3R)-2,3-dihydroxy-3-methylpentanoate = (S)-3-methyl-2-oxopentanoate + H2O. It functions in the pathway amino-acid biosynthesis; L-isoleucine biosynthesis; L-isoleucine from 2-oxobutanoate: step 3/4. Its pathway is amino-acid biosynthesis; L-valine biosynthesis; L-valine from pyruvate: step 3/4. Functionally, functions in the biosynthesis of branched-chain amino acids. Catalyzes the dehydration of (2R,3R)-2,3-dihydroxy-3-methylpentanoate (2,3-dihydroxy-3-methylvalerate) into 2-oxo-3-methylpentanoate (2-oxo-3-methylvalerate) and of (2R)-2,3-dihydroxy-3-methylbutanoate (2,3-dihydroxyisovalerate) into 2-oxo-3-methylbutanoate (2-oxoisovalerate), the penultimate precursor to L-isoleucine and L-valine, respectively. This Shewanella baltica (strain OS155 / ATCC BAA-1091) protein is Dihydroxy-acid dehydratase.